Reading from the N-terminus, the 80-residue chain is Acyl carrier protein (80 aa).

Residues 2-77 form the Carrier domain; it reads SDIEQRVKKI…QAIDYAKAHV (76 aa). Residue S37 is modified to O-(pantetheine 4'-phosphoryl)serine.

This sequence belongs to the acyl carrier protein (ACP) family. In terms of processing, 4'-phosphopantetheine is transferred from CoA to a specific serine of apo-ACP by AcpS. This modification is essential for activity because fatty acids are bound in thioester linkage to the sulfhydryl of the prosthetic group.

Its subcellular location is the cytoplasm. It functions in the pathway lipid metabolism; fatty acid biosynthesis. Its function is as follows. Carrier of the growing fatty acid chain in fatty acid biosynthesis. This Herminiimonas arsenicoxydans protein is Acyl carrier protein.